Here is a 162-residue protein sequence, read N- to C-terminus: Probable cytosine deaminase (162 aa).

Residues 8–132 enclose the CMP/dCMP-type deaminase domain; that stretch reads EKDLAYLREA…PLYINSRDIL (125 aa). H59 serves as a coordination point for Zn(2+). The active-site Proton donor is E61. The Zn(2+) site is built by C87 and C90. Residue D159 coordinates substrate.

This sequence belongs to the cytidine and deoxycytidylate deaminase family. Homodimer. The cofactor is Zn(2+).

The protein resides in the cytoplasm. It localises to the nucleus. The enzyme catalyses cytosine + H2O + H(+) = uracil + NH4(+). It participates in pyrimidine metabolism; UMP biosynthesis via salvage pathway; uracil from cytosine: step 1/1. In terms of biological role, catalyzes the hydrolytic deamination of cytosine to uracil or 5-methylcytosine to thymine. Is involved in the pyrimidine salvage pathway, which allows the cell to utilize cytosine for pyrimidine nucleotide synthesis. The protein is Probable cytosine deaminase of Schizosaccharomyces pombe (strain 972 / ATCC 24843) (Fission yeast).